Here is a 314-residue protein sequence, read N- to C-terminus: Homoserine O-acetyltransferase (314 aa).

Residue Cys142 is the Acyl-thioester intermediate of the active site. Lys163 and Ser192 together coordinate substrate. Residue His235 is the Proton acceptor of the active site. Residue Glu237 is part of the active site. Residue Arg249 participates in substrate binding.

It belongs to the MetA family.

It is found in the cytoplasm. It carries out the reaction L-homoserine + acetyl-CoA = O-acetyl-L-homoserine + CoA. It participates in amino-acid biosynthesis; L-methionine biosynthesis via de novo pathway; O-acetyl-L-homoserine from L-homoserine: step 1/1. Its function is as follows. Transfers an acetyl group from acetyl-CoA to L-homoserine, forming acetyl-L-homoserine. In Streptococcus pneumoniae (strain Taiwan19F-14), this protein is Homoserine O-acetyltransferase.